The following is a 406-amino-acid chain: Cysteine desulfurase (406 aa).

The residue at position 226 (Lys226) is an N6-(pyridoxal phosphate)lysine. The active-site Cysteine persulfide intermediate is the Cys364.

The protein belongs to the class-V pyridoxal-phosphate-dependent aminotransferase family. Csd subfamily. In terms of assembly, homodimer. Interacts with SufE and the SufBCD complex composed of SufB, SufC and SufD. The interaction with SufE is required to mediate the direct transfer of the sulfur atom from the S-sulfanylcysteine. Pyridoxal 5'-phosphate serves as cofactor.

The protein localises to the cytoplasm. It catalyses the reaction (sulfur carrier)-H + L-cysteine = (sulfur carrier)-SH + L-alanine. It carries out the reaction L-selenocysteine + AH2 = hydrogenselenide + L-alanine + A + H(+). It participates in cofactor biosynthesis; iron-sulfur cluster biosynthesis. In terms of biological role, cysteine desulfurases mobilize the sulfur from L-cysteine to yield L-alanine, an essential step in sulfur metabolism for biosynthesis of a variety of sulfur-containing biomolecules. Component of the suf operon, which is activated and required under specific conditions such as oxidative stress and iron limitation. Acts as a potent selenocysteine lyase in vitro, that mobilizes selenium from L-selenocysteine. Selenocysteine lyase activity is however unsure in vivo. In Escherichia coli O127:H6 (strain E2348/69 / EPEC), this protein is Cysteine desulfurase.